The chain runs to 87 residues: Serine rich endogenous peptide 17 (87 aa).

The N-terminal stretch at 1–28 (MTGKAPFFVILIAALLLLSSFFFGEVKA) is a signal peptide. Positions 32-87 (KQPKHRKLGNREGDENRSNEIVVQMKARVKRSKSKRGPQKKEPYKKPPCSPPTHPA) are disordered. The segment covering 40 to 49 (GNREGDENRS) has biased composition (basic and acidic residues). Positions 51–71 (EIVVQMKARVKRSKSKRGPQK) match the SCOOP motif motif. The segment covering 58 to 69 (ARVKRSKSKRGP) has biased composition (basic residues). The short motif at 63–65 (SKS) is the SxS motif essential for MIK2 binding element. Pro residues predominate over residues 77-87 (KPPCSPPTHPA).

This sequence belongs to the serine rich endogenous peptide (SCOOP) phytocytokine family. Interacts with MIK2 (via extracellular leucine-rich repeat domain); this interaction triggers the formation of complex between MIK2 and the BAK1/SERK3 and SERK4 coreceptors, and subsequent BAK1 activation by phosphorylation.

The protein localises to the cell membrane. Its subcellular location is the secreted. It localises to the extracellular space. The protein resides in the apoplast. Brassicaceae-specific phytocytokine (plant endogenous peptide released into the apoplast) perceived by MIK2 in a BAK1/SERK3 and SERK4 coreceptors-dependent manner, that modulates various physiological and antimicrobial processes including growth prevention and reactive oxygen species (ROS) response regulation. The polypeptide is Serine rich endogenous peptide 17 (Arabidopsis thaliana (Mouse-ear cress)).